Consider the following 333-residue polypeptide: MNQTLIQEILEVVEQAAIASAKLTGLGQKDEADAAAVEAMRLRMGKIEMKGKIVIGEGERDEAPMLYIGEEVGSGSGPGVDFAVDPCEGTNLCANNQRGSMAVLAASDTGGLFNAPDFYMNKLAAPPAAKGKVDIRNSATENLKILSDCLGLSIDELTVVVMDRTRHKDLIKEIRGCGAKVQPISDGDVQAAIACGFAGIGTHCLMGIGAAPEGVISAAAMRALGGHFQGQLVYDPAIAQTSEWADYTKEGNIKRLNEMGITDIDKIYEANELASGENVVFAGSGITDGLLFDGVKFERDCVRTSSLVISTLDSTARFTNTVHIKDGAKSISL.

The Mn(2+) site is built by D33, E57, D85, and E88. Substrate is bound by residues 88 to 90, Y119, 164 to 166, and 186 to 188; these read EGT, RTR, and DGD. E213 lines the Mn(2+) pocket.

This sequence belongs to the FBPase class 2 family. In terms of assembly, homotetramer. Mn(2+) is required as a cofactor.

It catalyses the reaction beta-D-fructose 1,6-bisphosphate + H2O = beta-D-fructose 6-phosphate + phosphate. It carries out the reaction D-sedoheptulose 1,7-bisphosphate + H2O = D-sedoheptulose 7-phosphate + phosphate. It functions in the pathway carbohydrate biosynthesis; Calvin cycle. Functionally, catalyzes the hydrolysis of fructose 1,6-bisphosphate (Fru 1,6-P2) and sedoheptulose 1,7-bisphosphate (Sed 1,7-P2) to fructose 6-phosphate and sedoheptulose 7-phosphate, respectively. This chain is D-fructose 1,6-bisphosphatase class 2/sedoheptulose 1,7-bisphosphatase, found in Prochlorococcus marinus (strain AS9601).